A 123-amino-acid polypeptide reads, in one-letter code: uncharacterized protein (123 aa).

This is an uncharacterized protein from Escherichia coli O157:H7.